The primary structure comprises 317 residues: Phosphopantothenate--cysteine ligase 1 (317 aa).

It belongs to the PPC synthetase family. In terms of assembly, homodimer.

It catalyses the reaction (R)-4'-phosphopantothenate + L-cysteine + ATP = N-[(R)-4-phosphopantothenoyl]-L-cysteine + AMP + diphosphate + H(+). It functions in the pathway cofactor biosynthesis; coenzyme A biosynthesis; CoA from (R)-pantothenate: step 2/5. In terms of biological role, catalyzes the first step in the biosynthesis of coenzyme A from vitamin B5/pantothenate, where cysteine is conjugated to 4'-phosphopantothenate to form 4-phosphopantothenoylcysteine. The catalytic activity is not CTP- but ATP-dependent. This is Phosphopantothenate--cysteine ligase 1 (PPCS1) from Arabidopsis thaliana (Mouse-ear cress).